The primary structure comprises 349 residues: Lipoyl synthase (349 aa).

[4Fe-4S] cluster contacts are provided by Cys55, Cys60, Cys66, Cys81, Cys85, Cys88, and Ser292. Residues 67–281 (WESREATFLI…ADFARELGFG (215 aa)) form the Radical SAM core domain.

Belongs to the radical SAM superfamily. Lipoyl synthase family. The cofactor is [4Fe-4S] cluster.

Its subcellular location is the cytoplasm. It carries out the reaction [[Fe-S] cluster scaffold protein carrying a second [4Fe-4S](2+) cluster] + N(6)-octanoyl-L-lysyl-[protein] + 2 oxidized [2Fe-2S]-[ferredoxin] + 2 S-adenosyl-L-methionine + 4 H(+) = [[Fe-S] cluster scaffold protein] + N(6)-[(R)-dihydrolipoyl]-L-lysyl-[protein] + 4 Fe(3+) + 2 hydrogen sulfide + 2 5'-deoxyadenosine + 2 L-methionine + 2 reduced [2Fe-2S]-[ferredoxin]. Its pathway is protein modification; protein lipoylation via endogenous pathway; protein N(6)-(lipoyl)lysine from octanoyl-[acyl-carrier-protein]: step 2/2. In terms of biological role, catalyzes the radical-mediated insertion of two sulfur atoms into the C-6 and C-8 positions of the octanoyl moiety bound to the lipoyl domains of lipoate-dependent enzymes, thereby converting the octanoylated domains into lipoylated derivatives. This chain is Lipoyl synthase, found in Corynebacterium diphtheriae (strain ATCC 700971 / NCTC 13129 / Biotype gravis).